Consider the following 381-residue polypeptide: Homoserine O-succinyltransferase (381 aa).

An AB hydrolase-1 domain is found at 45-360 (NAVLVCHALN…PHGHDAFLLD (316 aa)). Catalysis depends on serine 151, which acts as the Nucleophile. Substrate is bound at residue arginine 221. Active-site residues include aspartate 321 and histidine 354. Aspartate 355 lines the substrate pocket.

Belongs to the AB hydrolase superfamily. MetX family. Homodimer.

The protein localises to the cytoplasm. It carries out the reaction L-homoserine + succinyl-CoA = O-succinyl-L-homoserine + CoA. It functions in the pathway amino-acid biosynthesis; L-methionine biosynthesis via de novo pathway; O-succinyl-L-homoserine from L-homoserine: step 1/1. Its function is as follows. Transfers a succinyl group from succinyl-CoA to L-homoserine, forming succinyl-L-homoserine. The sequence is that of Homoserine O-succinyltransferase from Burkholderia vietnamiensis (strain G4 / LMG 22486) (Burkholderia cepacia (strain R1808)).